The primary structure comprises 615 residues: Medium-chain acyl-CoA ligase ACSF2, mitochondrial (615 aa).

The N-terminal 41 residues, 1-41 (MAVYHGMLRFGRLCIASLGARGPRTLLSRPRPNSKLQSVRA), are a transit peptide targeting the mitochondrion. Lys-179 carries the post-translational modification N6-acetyllysine. The residue at position 182 (Lys-182) is an N6-acetyllysine; alternate. Lys-182 carries the post-translational modification N6-succinyllysine; alternate. Lys-199 is modified (N6-acetyllysine). Residue 263 to 271 (TSGTTGNPK) participates in ATP binding. N6-acetyllysine occurs at positions 340 and 398. Lys-478 carries the N6-succinyllysine modification. 2 residues coordinate ATP: Asp-493 and Arg-508. The residue at position 510 (Lys-510) is an N6-acetyllysine. N6-acetyllysine; alternate occurs at positions 544 and 570. An N6-succinyllysine; alternate mark is found at Lys-544 and Lys-570. Lys-599 serves as a coordination point for ATP. An N6-succinyllysine modification is found at Lys-599.

The protein belongs to the ATP-dependent AMP-binding enzyme family.

It localises to the mitochondrion. It catalyses the reaction a medium-chain fatty acid + ATP + CoA = a medium-chain fatty acyl-CoA + AMP + diphosphate. It carries out the reaction octanoate + ATP + CoA = octanoyl-CoA + AMP + diphosphate. Functionally, acyl-CoA synthases catalyze the initial reaction in fatty acid metabolism, by forming a thioester with CoA. Has some preference toward medium-chain substrates. Plays a role in adipocyte differentiation. This chain is Medium-chain acyl-CoA ligase ACSF2, mitochondrial, found in Mus musculus (Mouse).